A 129-amino-acid chain; its full sequence is MIRNVKKQRPVNLDLQTIRFPITAIASILHRVSGVITFVAVGILLWLLGTSLSSPEGFEQASAIMGSFFVKFIMWGILTALAYHVVVGIRHMMMDFGYLEETFEAGKRSAKISFVITVVLSLLAGVLVW.

Over 1-26 the chain is Cytoplasmic; the sequence is MIRNVKKQRPVNLDLQTIRFPITAIA. A helical transmembrane segment spans residues 27 to 52; the sequence is SILHRVSGVITFVAVGILLWLLGTSL. Over 53–68 the chain is Periplasmic; that stretch reads SSPEGFEQASAIMGSF. A helical transmembrane segment spans residues 69–89; it reads FVKFIMWGILTALAYHVVVGI. H84 is a heme binding site. Over 90–108 the chain is Cytoplasmic; the sequence is RHMMMDFGYLEETFEAGKR. Residues 109–129 form a helical membrane-spanning segment; sequence SAKISFVITVVLSLLAGVLVW.

The protein belongs to the cytochrome b560 family. As to quaternary structure, part of an enzyme complex containing four subunits: a flavoprotein, an iron-sulfur protein, plus two membrane-anchoring proteins, SdhC and SdhD. The complex can form homotrimers. Requires heme as cofactor.

It localises to the cell inner membrane. Its pathway is carbohydrate metabolism; tricarboxylic acid cycle. Functionally, membrane-anchoring subunit of succinate dehydrogenase (SDH). This chain is Succinate dehydrogenase cytochrome b556 subunit (sdhC), found in Escherichia coli O157:H7.